A 178-amino-acid polypeptide reads, in one-letter code: MSLSSRLCLLTIVALILPSRGQTPKKPTSIFTADQTSATTRDNVPDPDQTSPGVQTTPLIWTREEATGSQTAAQTETQQLTKMATSNPVSDPGPHTSSKKGTPAVSRIEPLSPSKNFMPPSYIEHPLDSNENNPFYYDDTTLRKRGLLVAAVLFITGIIILTSGKCRQLSQFCLNRHR.

The first 21 residues, 1–21, serve as a signal peptide directing secretion; the sequence is MSLSSRLCLLTIVALILPSRG. The segment covering 21 to 59 has biased composition (polar residues); it reads GQTPKKPTSIFTADQTSATTRDNVPDPDQTSPGVQTTPL. The disordered stretch occupies residues 21 to 130; it reads GQTPKKPTSI…SYIEHPLDSN (110 aa). The Extracellular portion of the chain corresponds to 22 to 145; the sequence is QTPKKPTSIF…YYDDTTLRKR (124 aa). A compositionally biased stretch (low complexity) spans 67 to 79; that stretch reads TGSQTAAQTETQQ. Residues 80–100 show a composition bias toward polar residues; that stretch reads LTKMATSNPVSDPGPHTSSKK. Residues 146–166 form a helical membrane-spanning segment; that stretch reads GLLVAAVLFITGIIILTSGKC. The Cytoplasmic portion of the chain corresponds to 167 to 178; the sequence is RQLSQFCLNRHR.

Belongs to the FXYD family. Regulatory subunit of the sodium/potassium-transporting ATPase which is composed of a catalytic alpha subunit, a non-catalytic beta subunit and an additional regulatory subunit. The regulatory subunit, a member of the FXYD protein family, modulates the enzymatic activity in a tissue- and isoform-specific way by changing affinities of the Na+/K+-ATPase toward Na(+), K(+) or ATP. Post-translationally, glycosylated. Expressed mainly in epithelial tissue, such as lung, intestine and kidney. Not detected in brain, liver, muscle, and heart.

The protein localises to the cell membrane. Its subcellular location is the basolateral cell membrane. In terms of biological role, associates with and regulates the activity of the sodium/potassium-transporting ATPase (NKA) which catalyzes the hydrolysis of ATP coupled with the exchange of Na(+) and K(+) ions across the plasma membrane. May increase NKA activity by increasing the apparent affinity for Na(+). Involved in down-regulation of E-cadherin which results in reduced cell adhesion. Promotes metastasis. This is FXYD domain-containing ion transport regulator 5 (Fxyd5) from Mus musculus (Mouse).